Here is a 337-residue protein sequence, read N- to C-terminus: Glyceraldehyde-3-phosphate dehydrogenase (337 aa).

NAD(+) is bound by residues 12 to 13 (RI), Asp-34, and Lys-79. D-glyceraldehyde 3-phosphate-binding positions include 150 to 152 (SCT), Thr-181, 210 to 211 (TG), and Arg-233. Cys-151 (nucleophile) is an active-site residue. Asn-315 is an NAD(+) binding site.

The protein belongs to the glyceraldehyde-3-phosphate dehydrogenase family. In terms of assembly, homotetramer.

It is found in the cytoplasm. The catalysed reaction is D-glyceraldehyde 3-phosphate + phosphate + NAD(+) = (2R)-3-phospho-glyceroyl phosphate + NADH + H(+). It functions in the pathway carbohydrate degradation; glycolysis; pyruvate from D-glyceraldehyde 3-phosphate: step 1/5. The polypeptide is Glyceraldehyde-3-phosphate dehydrogenase (GPD1) (Cochliobolus heterostrophus (Southern corn leaf blight fungus)).